The primary structure comprises 154 residues: MTIAVAVKRLAHGAGLPLPDYATAGSAGLDLLAAVDAPVVIAPGARALVPTGLAIALPPDFELQVRPRSGLALKHGIVIPNSPGTIDSDYRGEIQVIVLNAGTEAFEVTRGMRIAQAVLAPVSRLVWQETDDLDRTAREAGGFGSTGLDFPMGN.

Residues Arg68–Gly70, Asn81, and Thr85–Asp87 each bind substrate.

It belongs to the dUTPase family. Requires Mg(2+) as cofactor.

It carries out the reaction dUTP + H2O = dUMP + diphosphate + H(+). It participates in pyrimidine metabolism; dUMP biosynthesis; dUMP from dCTP (dUTP route): step 2/2. This enzyme is involved in nucleotide metabolism: it produces dUMP, the immediate precursor of thymidine nucleotides and it decreases the intracellular concentration of dUTP so that uracil cannot be incorporated into DNA. This chain is Deoxyuridine 5'-triphosphate nucleotidohydrolase, found in Acidiphilium cryptum (strain JF-5).